The sequence spans 298 residues: Glutamyl-Q tRNA(Asp) synthetase (298 aa).

Residues 9 to 13 and E45 each bind L-glutamate; that span reads RFAPS. The 'HIGH' region motif lies at 12-22; that stretch reads PSPSGELHFGS. Zn(2+)-binding residues include C101, C103, Y115, and C119. Positions 172 and 190 each coordinate L-glutamate. The short motif at 228–232 is the 'KMSKS' region element; sequence KLSKQ. K231 serves as a coordination point for ATP.

The protein belongs to the class-I aminoacyl-tRNA synthetase family. GluQ subfamily. Zn(2+) is required as a cofactor.

Functionally, catalyzes the tRNA-independent activation of glutamate in presence of ATP and the subsequent transfer of glutamate onto a tRNA(Asp). Glutamate is transferred on the 2-amino-5-(4,5-dihydroxy-2-cyclopenten-1-yl) moiety of the queuosine in the wobble position of the QUC anticodon. The protein is Glutamyl-Q tRNA(Asp) synthetase of Citrobacter koseri (strain ATCC BAA-895 / CDC 4225-83 / SGSC4696).